The chain runs to 104 residues: Cysteine-rich and transmembrane domain-containing protein 1 (104 aa).

Pro residues-rich tracts occupy residues 1–25 (MNPE…PQQP) and 33–47 (GAPP…PPQG). Residues 1–47 (MNPENPPPYPGPGPTAPYPPYPQQPMGPMGPMGAPPPQGYPYPPPQG) are disordered. A helical membrane pass occupies residues 81–98 (LGPSTCLTACWTALCCCC).

The protein belongs to the CYSTM1 family.

Its subcellular location is the membrane. This chain is Cysteine-rich and transmembrane domain-containing protein 1 (Cystm1), found in Mus musculus (Mouse).